Here is a 484-residue protein sequence, read N- to C-terminus: 6-phosphogluconate dehydrogenase, decarboxylating (484 aa).

Residues 11–16, 34–36, 76–78, and N104 each bind NADP(+); these read GLAVMG, NRT, and VRA. Substrate is bound by residues N104 and 130-132; that span reads SGG. K185 (proton acceptor) is an active-site residue. Residue 188–189 coordinates substrate; the sequence is HN. E192 functions as the Proton donor in the catalytic mechanism. Y193, K262, R289, R447, and H453 together coordinate substrate.

The protein belongs to the 6-phosphogluconate dehydrogenase family. Homodimer.

The enzyme catalyses 6-phospho-D-gluconate + NADP(+) = D-ribulose 5-phosphate + CO2 + NADPH. It functions in the pathway carbohydrate degradation; pentose phosphate pathway; D-ribulose 5-phosphate from D-glucose 6-phosphate (oxidative stage): step 3/3. In terms of biological role, catalyzes the oxidative decarboxylation of 6-phosphogluconate to ribulose 5-phosphate and CO(2), with concomitant reduction of NADP to NADPH. This is 6-phosphogluconate dehydrogenase, decarboxylating (gnd) from Haemophilus influenzae (strain ATCC 51907 / DSM 11121 / KW20 / Rd).